The chain runs to 248 residues: MGTRLRALLGVLILLVLGGAGWLFLRWEPTLLPIRLIQIEGEVHHHSSQQLQERLTERLHGGILTADLVDLKQTAEELPWVGQATLRRVWPDTLRVQVREYRPIARWSLDGLVTADGIVFRPQGGSIPSNLPLLEGDDKRAPEITARYQAWQAALERVGRGIQRLSVDPRGDWRLKLASGAELRLGTTMVEERLARYLASASQLEAAGRPLTVDLRYSNGFSVKWAPNTDTGVRAHPDRVAARAGNRR.

At 1 to 4 (MGTR) the chain is on the cytoplasmic side. Residues 5–25 (LRALLGVLILLVLGGAGWLFL) traverse the membrane as a helical segment. The Periplasmic segment spans residues 26–248 (RWEPTLLPIR…RVAARAGNRR (223 aa)). The 70-residue stretch at 32-101 (LPIRLIQIEG…DTLRVQVREY (70 aa)) folds into the POTRA domain.

This sequence belongs to the FtsQ/DivIB family. FtsQ subfamily. As to quaternary structure, part of a complex composed of FtsB, FtsL and FtsQ.

It localises to the cell inner membrane. In terms of biological role, essential cell division protein. May link together the upstream cell division proteins, which are predominantly cytoplasmic, with the downstream cell division proteins, which are predominantly periplasmic. May control correct divisome assembly. The protein is Cell division protein FtsQ of Allochromatium vinosum (strain ATCC 17899 / DSM 180 / NBRC 103801 / NCIMB 10441 / D) (Chromatium vinosum).